The primary structure comprises 157 residues: 6,7-dimethyl-8-ribityllumazine synthase (157 aa).

Residues Phe-22, 57 to 59, and 81 to 83 contribute to the 5-amino-6-(D-ribitylamino)uracil site; these read AYE and TVI. Residue 86–87 participates in (2S)-2-hydroxy-3-oxobutyl phosphate binding; it reads GT. Residue His-89 is the Proton donor of the active site. Phe-114 contributes to the 5-amino-6-(D-ribitylamino)uracil binding site. Residue Arg-128 coordinates (2S)-2-hydroxy-3-oxobutyl phosphate.

Belongs to the DMRL synthase family. Forms an icosahedral capsid composed of 60 subunits, arranged as a dodecamer of pentamers.

The enzyme catalyses (2S)-2-hydroxy-3-oxobutyl phosphate + 5-amino-6-(D-ribitylamino)uracil = 6,7-dimethyl-8-(1-D-ribityl)lumazine + phosphate + 2 H2O + H(+). Its pathway is cofactor biosynthesis; riboflavin biosynthesis; riboflavin from 2-hydroxy-3-oxobutyl phosphate and 5-amino-6-(D-ribitylamino)uracil: step 1/2. In terms of biological role, catalyzes the formation of 6,7-dimethyl-8-ribityllumazine by condensation of 5-amino-6-(D-ribitylamino)uracil with 3,4-dihydroxy-2-butanone 4-phosphate. This is the penultimate step in the biosynthesis of riboflavin. The protein is 6,7-dimethyl-8-ribityllumazine synthase of Haemophilus influenzae (strain 86-028NP).